Here is a 148-residue protein sequence, read N- to C-terminus: NADPH-dependent 7-cyano-7-deazaguanine reductase (148 aa).

The active-site Thioimide intermediate is cysteine 50. The Proton donor role is filled by aspartate 57. Residues valine 72–serine 74 and histidine 91–glutamate 92 contribute to the substrate site.

It belongs to the GTP cyclohydrolase I family. QueF type 1 subfamily.

The protein localises to the cytoplasm. The catalysed reaction is 7-aminomethyl-7-carbaguanine + 2 NADP(+) = 7-cyano-7-deazaguanine + 2 NADPH + 3 H(+). It participates in tRNA modification; tRNA-queuosine biosynthesis. In terms of biological role, catalyzes the NADPH-dependent reduction of 7-cyano-7-deazaguanine (preQ0) to 7-aminomethyl-7-deazaguanine (preQ1). In Helicobacter acinonychis (strain Sheeba), this protein is NADPH-dependent 7-cyano-7-deazaguanine reductase.